The sequence spans 258 residues: uncharacterized protein (258 aa).

The first 20 residues, 1 to 20 (MKCFQKLYIFILILIVLMAG), serve as a signal peptide directing secretion. A lipid anchor (N-palmitoyl cysteine) is attached at Cys21. Cys21 is lipidated: S-diacylglycerol cysteine.

This sequence belongs to the staphylococcal tandem lipoprotein family.

The protein resides in the cell membrane. This is an uncharacterized protein from Staphylococcus aureus (strain bovine RF122 / ET3-1).